Reading from the N-terminus, the 665-residue chain is Envelope glycoprotein (665 aa).

The signal sequence occupies residues M1–P31. The segment at V32–P267 is receptor-binding domain (RBD). At V32–L605 the chain is on the extracellular side. N43 carries an N-linked (GlcNAc...) asparagine; by host glycan. 5 cysteine pairs are disulfide-bonded: C77/C129, C103/C118, C104/C114, C152/C172, and C164/C177. D117 is a Zn(2+) binding site. 2 N-linked (GlcNAc...) asparagine; by host glycosylation sites follow: N199 and N211. An intrachain disulfide couples C209 to C215. The disordered stretch occupies residues V266 to G307. N-linked (GlcNAc...) asparagine; by host glycosylation occurs at N324. Cystine bridges form between C334–C337, C334–C558, C364–C418, C383–C395, C425–C438, and C550–C557. Residues C334 to C337 carry the CXXC motif. N-linked (GlcNAc...) asparagine; by host glycans are attached at residues N356 and N363. N396, N400, and N432 each carry an N-linked (GlcNAc...) asparagine; by host glycan. Residues V470–I490 form a fusion peptide region. A coiled-coil region spans residues A505–V532. The immunosuppression stretch occupies residues L533–L549. The CX6CC motif lies at C550–C558. Residues I606 to I626 traverse the membrane as a helical segment. C625 carries S-palmitoyl cysteine; by host lipidation. Topologically, residues L627–E665 are cytoplasmic. Residues Y650–L653 carry the YXXL motif; contains endocytosis signal motif.

As to quaternary structure, the mature envelope protein (Env) consists of a trimer of SU-TM heterodimers attached by a labile interchain disulfide bond. Specific enzymatic cleavages in vivo yield mature proteins. Envelope glycoproteins are synthesized as an inactive precursor that is N-glycosylated and processed likely by host cell furin or by a furin-like protease in the Golgi to yield the mature SU and TM proteins. The cleavage site between SU and TM requires the minimal sequence [KR]-X-[KR]-R. The R-peptide is released from the C-terminus of the cytoplasmic tail of the TM protein upon particle formation as a result of proteolytic cleavage by the viral protease. Cleavage of this peptide is required for TM to become fusogenic. In terms of processing, the CXXC motif is highly conserved across a broad range of retroviral envelope proteins. It is thought to participate in the formation of a labile disulfide bond possibly with the CX6CC motif present in the transmembrane protein. Isomerization of the intersubunit disulfide bond to an SU intrachain disulfide bond is thought to occur upon receptor recognition in order to allow membrane fusion. Post-translationally, the transmembrane protein is palmitoylated. The R-peptide is palmitoylated.

It localises to the virion membrane. Its subcellular location is the host cell membrane. Functionally, the surface protein (SU) attaches the virus to the host cell by binding to its receptor. This interaction triggers the refolding of the transmembrane protein (TM) and is thought to activate its fusogenic potential by unmasking its fusion peptide. Fusion occurs at the host cell plasma membrane. Its function is as follows. The transmembrane protein (TM) acts as a class I viral fusion protein. Under the current model, the protein has at least 3 conformational states: pre-fusion native state, pre-hairpin intermediate state, and post-fusion hairpin state. During viral and target cell membrane fusion, the coiled coil regions (heptad repeats) assume a trimer-of-hairpins structure, positioning the fusion peptide in close proximity to the C-terminal region of the ectodomain. The formation of this structure appears to drive apposition and subsequent fusion of viral and target cell membranes. Membranes fusion leads to delivery of the nucleocapsid into the cytoplasm. The chain is Envelope glycoprotein (env) from Radiation murine leukemia virus.